Reading from the N-terminus, the 446-residue chain is Phosphoglucosamine mutase (446 aa).

The Phosphoserine intermediate role is filled by S104. The Mg(2+) site is built by S104, D241, D243, and D245. Position 104 is a phosphoserine (S104).

It belongs to the phosphohexose mutase family. Requires Mg(2+) as cofactor. Post-translationally, activated by phosphorylation.

It catalyses the reaction alpha-D-glucosamine 1-phosphate = D-glucosamine 6-phosphate. Its function is as follows. Catalyzes the conversion of glucosamine-6-phosphate to glucosamine-1-phosphate. The chain is Phosphoglucosamine mutase from Teredinibacter turnerae (strain ATCC 39867 / T7901).